We begin with the raw amino-acid sequence, 548 residues long: Glucose-6-phosphate isomerase (548 aa).

Glu-353 (proton donor) is an active-site residue. Residues His-384 and Lys-512 contribute to the active site.

Belongs to the GPI family.

It localises to the cytoplasm. The catalysed reaction is alpha-D-glucose 6-phosphate = beta-D-fructose 6-phosphate. It functions in the pathway carbohydrate biosynthesis; gluconeogenesis. The protein operates within carbohydrate degradation; glycolysis; D-glyceraldehyde 3-phosphate and glycerone phosphate from D-glucose: step 2/4. In terms of biological role, catalyzes the reversible isomerization of glucose-6-phosphate to fructose-6-phosphate. The sequence is that of Glucose-6-phosphate isomerase from Chlorobium chlorochromatii (strain CaD3).